The primary structure comprises 352 residues: Dysbindin (352 aa).

At Ser-11 the chain carries Phosphoserine. Residues 88–176 (EKKRTSLNEL…EAFKAELDTE (89 aa)) adopt a coiled-coil conformation. The dysbindin stretch occupies residues 173–325 (LDTEHTQKAL…DEEEVQVDTA (153 aa)). The Nuclear export signal signature appears at 243-256 (LMDISDQEALDVFL). A disordered region spans residues 267–352 (SPGVEMESNP…SDQCDSTQDI (86 aa)). A compositionally biased stretch (polar residues) spans 274 to 285 (SNPNQNEMSLQI). A compositionally biased stretch (low complexity) spans 286–301 (PSPSESASQPPASPSA). 3 positions are modified to phosphoserine: Ser-315, Ser-340, and Ser-343.

Belongs to the dysbindin family. In terms of assembly, interacts with AP3M1 and TRIM32. Interacts (isoform 1 and isoform 2 only) with the DNA-dependent protein kinase complex DNA-PK; the interaction phosphorylates DTNBP1 in vitro. Interacts directly in this complex with XRCC5 and XRCC6. Interacts with XPO1; the interaction exports DTNBP1 out of the nucleus. Component of the biogenesis of lysosome-related organelles complex 1 (BLOC-1) composed of BLOC1S1, BLOC1S2, BLOC1S3, BLOC1S4, BLOC1S5, BLOC1S6, DTNBP1/BLOC1S7 and SNAPIN/BLOC1S8. The BLOC-1 complex associates with the AP-3 protein complex and membrane protein cargos. This BLOC-1 complex also associates with the BLOC-2 complex in endosomes. Binds to DTNA and DTNB but may not be a physiological binding partner. Interacts (via its coiled coil domain) with KXD1. Interacts with AP3B2, BLOC1S5, BLOC1S6, CMYA5, PI4K2, RNF151 and SNAPIN/BLOC1S8. Interacts with XPO1; the interaction exports DTNBP1 out of the nucleus. Ubiquitinated by TRIM32. Ubiquitination leads to DTNBP1 degradation. Detected in brain, in hippocampus and dentate gyrus neurons. Detected at axon bundles and axon terminals, notably in the cerebellum and hippocampus. Detected in neuropil in hippocampus, lateral septum, basal ganglia and substantia nigra. Highly expressed in pyramidal cells of hippocampus CA2 and CA3. Detected at the heart and skeletal muscle sarcolemma (at protein level). Ubiquitously expressed. The highest expression is observed in testis, liver, kidney, brain, heart and lung. Expressed at lower levels in stomach and small intestine.

The protein localises to the cytoplasm. It is found in the cytoplasmic vesicle membrane. It localises to the endosome membrane. Its subcellular location is the melanosome membrane. The protein resides in the postsynaptic density. The protein localises to the endoplasmic reticulum. It is found in the nucleus. It localises to the cytoplasmic vesicle. Its subcellular location is the secretory vesicle. The protein resides in the synaptic vesicle membrane. The protein localises to the postsynaptic cell membrane. In terms of biological role, component of the BLOC-1 complex, a complex that is required for normal biogenesis of lysosome-related organelles (LRO), such as platelet dense granules and melanosomes. In concert with the AP-3 complex, the BLOC-1 complex is required to target membrane protein cargos into vesicles assembled at cell bodies for delivery into neurites and nerve terminals. The BLOC-1 complex, in association with SNARE proteins, is also proposed to be involved in neurite extension. Associates with the BLOC-2 complex to facilitate the transport of TYRP1 independent of AP-3 function. Plays a role in synaptic vesicle trafficking and in neurotransmitter release. Plays a role in the regulation of cell surface exposure of DRD2. May play a role in actin cytoskeleton reorganization and neurite outgrowth. May modulate MAPK8 phosphorylation. Appears to promote neuronal transmission and viability through regulating the expression of SNAP25 and SYN1, modulating PI3-kinase-Akt signaling and influencing glutamatergic release. Regulates the expression of SYN1 through binding to its promoter. Modulates prefrontal cortical activity via the dopamine/D2 pathway. This is Dysbindin (Dtnbp1) from Mus musculus (Mouse).